Here is a 513-residue protein sequence, read N- to C-terminus: ATP synthase subunit alpha (513 aa).

Gly169 to Thr176 is a binding site for ATP.

The protein belongs to the ATPase alpha/beta chains family. F-type ATPases have 2 components, CF(1) - the catalytic core - and CF(0) - the membrane proton channel. CF(1) has five subunits: alpha(3), beta(3), gamma(1), delta(1), epsilon(1). CF(0) has three main subunits: a(1), b(2) and c(9-12). The alpha and beta chains form an alternating ring which encloses part of the gamma chain. CF(1) is attached to CF(0) by a central stalk formed by the gamma and epsilon chains, while a peripheral stalk is formed by the delta and b chains.

Its subcellular location is the cell inner membrane. It carries out the reaction ATP + H2O + 4 H(+)(in) = ADP + phosphate + 5 H(+)(out). Functionally, produces ATP from ADP in the presence of a proton gradient across the membrane. The alpha chain is a regulatory subunit. The polypeptide is ATP synthase subunit alpha (Bordetella petrii (strain ATCC BAA-461 / DSM 12804 / CCUG 43448)).